Reading from the N-terminus, the 329-residue chain is MQTNLLKPKTINVEQLGANRAKVTLEPFERGYGHTLGNALRRVLLSSMVGHAATEVTIAGVLHEYSSIDGVQEDVVNILLNLKGVVFKLHNRDEVTLSLRKDGEGPVTAADIQTPHDVEIINPEHVIVNLSHGGKIDMQIKVENGRGYVPGTMRRYGDESPKSIGRIVLDASFSPVKRVSYTVESARVEQRTDLDKLVLEIETNGAVTAEDAVRASAKILVEQLAVFAQLEGNELAAFDAPVQRSSQQFDPILLRPVDELELTVRSANCLKAENIYYIGDLIQRTENELLKTPNLGRKSLNEIKEVLASRGLTLGMRLESWPPAGLDKR.

The segment at 1 to 231 is alpha N-terminal domain (alpha-NTD); that stretch reads MQTNLLKPKT…EQLAVFAQLE (231 aa). The interval 249 to 329 is alpha C-terminal domain (alpha-CTD); it reads FDPILLRPVD…SWPPAGLDKR (81 aa).

It belongs to the RNA polymerase alpha chain family. In terms of assembly, homodimer. The RNAP catalytic core consists of 2 alpha, 1 beta, 1 beta' and 1 omega subunit. When a sigma factor is associated with the core the holoenzyme is formed, which can initiate transcription.

It carries out the reaction RNA(n) + a ribonucleoside 5'-triphosphate = RNA(n+1) + diphosphate. DNA-dependent RNA polymerase catalyzes the transcription of DNA into RNA using the four ribonucleoside triphosphates as substrates. The chain is DNA-directed RNA polymerase subunit alpha from Polaromonas sp. (strain JS666 / ATCC BAA-500).